A 999-amino-acid polypeptide reads, in one-letter code: Hypoxia up-regulated protein 1 (999 aa).

The signal sequence occupies residues 1–32 (MADKVRRQRPRRRVCWALVAVLLADLLALSDT). Asn155, Asn222, and Asn515 each carry an N-linked (GlcNAc...) asparagine glycan. The residue at position 567 (Ser567) is a Phosphoserine. Positions 578–694 (GNTISSLFGG…KKQKPARKRR (117 aa)) are disordered. N-linked (GlcNAc...) asparagine glycosylation occurs at Asn596. Composition is skewed to basic and acidic residues over residues 611–626 (GSKD…KEEA) and 641–672 (PKGD…KAEA). Residues Asn830, Asn862, and Asn869 are each glycosylated (N-linked (GlcNAc...) asparagine). Lys883 bears the N6-acetyllysine mark. Positions 909-999 (AKFTKPRPRP…QKRPLKNDEL (91 aa)) are disordered. N-linked (GlcNAc...) asparagine glycans are attached at residues Asn922 and Asn931. The short motif at 996–999 (NDEL) is the Prevents secretion from ER element.

It belongs to the heat shock protein 70 family. In terms of assembly, part of a large chaperone multiprotein complex comprising DNAJB11, HSP90B1, HSPA5, HYOU, PDIA2, PDIA4, PDIA6, PPIB, SDF2L1, UGGT1 and very small amounts of ERP29, but not, or at very low levels, CALR nor CANX. In terms of tissue distribution, highly expressed in tissues that contain well-developed endoplasmic reticulum and synthesize large amounts of secretory proteins. Highly expressed in liver and pancreas and lower expression in brain and kidney. Also expressed in macrophages within aortic atherosclerotic plaques, and in breast cancers.

It is found in the endoplasmic reticulum lumen. Functionally, has a pivotal role in cytoprotective cellular mechanisms triggered by oxygen deprivation. Promotes HSPA5/BiP-mediated ATP nucleotide exchange and thereby activates the unfolded protein response (UPR) pathway in the presence of endoplasmic reticulum stress. May play a role as a molecular chaperone and participate in protein folding. This chain is Hypoxia up-regulated protein 1 (HYOU1), found in Homo sapiens (Human).